The chain runs to 105 residues: DNA-directed RNA polymerase RPB9 homolog (105 aa).

Cys-4, Cys-7, Cys-24, Cys-26, Cys-73, Cys-76, and Cys-96 together coordinate Zn(2+). The C4-type; atypical zinc-finger motif lies at 4–26; it reads CKACSSCMVRTYVDGNIIFRCSC.

Belongs to the Asfivirus DNA-directed RNA polymerase RPB9 homolog family. In terms of assembly, part of the viral DNA-directed RNA polymerase that consists of 8 polII-like subunits (RPB1, RPB2, RPB3, RPB5, RPB6, RPB7, RPB9, RPB10), a capping enzyme and a termination factor.

It localises to the host cytoplasm. Component of the DNA-directed RNA polymerase (RNAP) that catalyzes the transcription in the cytoplasm of viral DNA into RNA using the four ribonucleoside triphosphates as substrates. In African swine fever virus (isolate Pig/Kenya/KEN-50/1950) (ASFV), this protein is DNA-directed RNA polymerase RPB9 homolog.